The primary structure comprises 750 residues: ABC transporter D family member 3 (750 aa).

The segment covering 1–14 (MKKNNVNNITETLN) has biased composition (polar residues). The segment at 1–32 (MKKNNVNNITETLNSSSSSSSSSGSSSDEEVK) is disordered. The segment covering 15–26 (SSSSSSSSSGSS) has biased composition (low complexity). 4 helical membrane-spanning segments follow: residues 63–83 (IVIILYEKPVIPLLLFLLLFG), 123–143 (FAIGGSALFDAIIKFIVSIMA), 188–208 (FTTLLSSIVSQCITGPMVVVY), and 215–235 (TTIDWYAPLIVYGYFFLGYFI). The ABC transmembrane type-1 domain occupies 74–362 (PLLLFLLLFG…EQAKQQFEAL (289 aa)). A coiled-coil region spans residues 334 to 370 (ALLKRSNKNIKNEELLVEEEQAKQQFEALLKNKKRVI). A helical membrane pass occupies residues 382 to 402 (MFTFFSPLINYFIISIPVFFL). Positions 507-737 (ITLDDVTYFT…SNNINTINID (231 aa)) constitute an ABC transporter domain. 540-547 (GPSGSGKS) lines the ATP pocket.

The protein belongs to the ABC transporter superfamily. ABCD family. Peroxisomal fatty acyl CoA transporter (TC 3.A.1.203) subfamily.

It is found in the membrane. The protein is ABC transporter D family member 3 (abcD3) of Dictyostelium discoideum (Social amoeba).